Reading from the N-terminus, the 197-residue chain is Putative glutathione-dependent formaldehyde-activating enzyme (197 aa).

The region spanning 22-171 is the CENP-V/GFA domain; sequence FPGGKLYCHC…LKSLGLENYD (150 aa). Zn(2+) is bound by residues Cys-29, Cys-31, Cys-50, Cys-52, Cys-55, Cys-97, and Cys-100.

Belongs to the Gfa family. It depends on Zn(2+) as a cofactor.

It carries out the reaction S-(hydroxymethyl)glutathione = glutathione + formaldehyde. The protein operates within one-carbon metabolism; formaldehyde degradation; formate from formaldehyde (glutathione route): step 1/3. Catalyzes the condensation of formaldehyde and glutathione to S-hydroxymethylglutathione. This chain is Putative glutathione-dependent formaldehyde-activating enzyme, found in Emericella nidulans (strain FGSC A4 / ATCC 38163 / CBS 112.46 / NRRL 194 / M139) (Aspergillus nidulans).